The chain runs to 1356 residues: Kinesin-like protein KIF24 (1356 aa).

The SAM domain occupies 1 to 64 (MASWLYECLC…FQLIKIIKIM (64 aa)). The disordered stretch occupies residues 93–119 (GPRRQLHFDSPSASKDKMANNETGSLS). A Phosphoserine modification is found at S102. A Kinesin motor domain is found at 218-541 (KIRVCVRKRP…LRYADRVKEL (324 aa)). Residue 308 to 315 (GQTGAGKT) participates in ATP binding. S473 is modified (phosphoserine). Residues 473–702 (SLLALKECIR…PTRGKKVQPV (230 aa)) form an interaction with MPHOSPH9 region. Polar residues predominate over residues 552-571 (TSQNQTSANASPKRIQSSPV). Disordered stretches follow at residues 552-581 (TSQN…CSPK), 597-664 (PTKV…LCSE), 788-840 (EGRL…STAL), 897-947 (RGAL…HQKP), and 964-998 (VPEQ…DQRD). S579 carries the phosphoserine modification. A Phosphothreonine; by NEK2 modification is found at T615. S616 carries the phosphoserine; by NEK2 modification. S640, S817, and S820 each carry phosphoserine. Residues 640-653 (SPRKGTTRSGHSIK) are compositionally biased toward basic residues. Residues 810 to 821 (QAEDLDDSDFSE) are compositionally biased toward acidic residues. The segment covering 830–840 (QPAMKQGSTAL) has biased composition (polar residues). Over residues 970-979 (GSLSSPSPEN) the composition is skewed to polar residues. S1008 is subject to Phosphoserine. Residues 1109 to 1140 (LSSSPPDNRPSGDLPALSPSPIHQHSPDKLPG) form a disordered region.

Belongs to the TRAFAC class myosin-kinesin ATPase superfamily. Kinesin family. Interacts with CCP110, CEP97, TALPID3. Interacts with MPHOSPH9. As to expression, expressed in brain, spinal cord, and small intestine.

The protein resides in the cytoplasm. The protein localises to the cytoskeleton. Its subcellular location is the microtubule organizing center. It localises to the centrosome. It is found in the centriole. In terms of biological role, microtubule-dependent motor protein that acts as a negative regulator of ciliogenesis by mediating recruitment of CCP110 to mother centriole in cycling cells, leading to restrict nucleation of cilia at centrioles. Mediates depolymerization of microtubules of centriolar origin, possibly to suppress aberrant cilia formation. Following activation by NEK2 involved in disassembly of primary cilium during G2/M phase but does not disassemble fully formed ciliary axonemes. As cilium assembly and disassembly is proposed to coexist in a dynamic equilibrium may suppress nascent cilium assembly and, potentially, ciliar re-assembly in cells that have already disassembled their cilia ensuring the completion of cilium removal in the later stages of the cell cycle. Plays an important role in recruiting MPHOSPH9, a negative regulator of cilia formation to the distal end of mother centriole. The sequence is that of Kinesin-like protein KIF24 (Kif24) from Mus musculus (Mouse).